The chain runs to 209 residues: Thymidylate kinase (209 aa).

11 to 18 (GPDGAGKT) is a binding site for ATP.

The protein belongs to the thymidylate kinase family.

The catalysed reaction is dTMP + ATP = dTDP + ADP. Functionally, phosphorylation of dTMP to form dTDP in both de novo and salvage pathways of dTTP synthesis. The sequence is that of Thymidylate kinase from Streptococcus thermophilus (strain ATCC BAA-250 / LMG 18311).